The sequence spans 689 residues: uncharacterized protein (689 aa).

Substrate is bound at residue S566. Catalysis depends on Y579, which acts as the Proton acceptor.

The protein belongs to the short-chain dehydrogenases/reductases (SDR) family.

This is an uncharacterized protein from Bacillus subtilis (strain 168).